The chain runs to 227 residues: Cytidylate kinase (227 aa).

12 to 20 serves as a coordination point for ATP; sequence GPSGAGKGT.

It belongs to the cytidylate kinase family. Type 1 subfamily.

The protein localises to the cytoplasm. The catalysed reaction is CMP + ATP = CDP + ADP. It carries out the reaction dCMP + ATP = dCDP + ADP. The protein is Cytidylate kinase of Salmonella choleraesuis (strain SC-B67).